The following is a 482-amino-acid chain: UDP-N-acetylmuramate--L-alanine ligase (482 aa).

Position 111–117 (111–117 (GTHGKTT)) interacts with ATP.

This sequence belongs to the MurCDEF family.

The protein localises to the cytoplasm. The enzyme catalyses UDP-N-acetyl-alpha-D-muramate + L-alanine + ATP = UDP-N-acetyl-alpha-D-muramoyl-L-alanine + ADP + phosphate + H(+). Its pathway is cell wall biogenesis; peptidoglycan biosynthesis. In terms of biological role, cell wall formation. The chain is UDP-N-acetylmuramate--L-alanine ligase from Symbiobacterium thermophilum (strain DSM 24528 / JCM 14929 / IAM 14863 / T).